The sequence spans 935 residues: DNA repair protein rev1 (935 aa).

The 89-residue stretch at 59 to 147 (SKSDLFHGLA…KILPWINYRT (89 aa)) folds into the BRCT domain. Residues 162-178 (SKPSQPEGNLEDIQTSS) show a composition bias toward polar residues. The disordered stretch occupies residues 162–193 (SKPSQPEGNLEDIQTSSQEEEHDNEKDKTKES). A compositionally biased stretch (basic and acidic residues) spans 184–193 (DNEKDKTKES). The interaction with target DNA stretch occupies residues 235–245 (FFSSSRLHHLS). DCTP-binding positions include arginine 240 and 283-287 (DFDCF). The 182-residue stretch at 279–460 (LLHVDFDCFF…LSVQDLPGVG (182 aa)) folds into the UmuC domain. Mg(2+) contacts are provided by aspartate 283 and phenylalanine 284. An interaction with target DNA region spans residues 310 to 312 (IKN). DCTP-binding positions include 317 to 323 (SCNYEAR), asparagine 329, and aspartate 378. Mg(2+)-binding residues include aspartate 378 and glutamate 379. Interaction with target DNA regions lie at residues 460–463 (GSSQ) and 517–525 (RRSISVDVN).

The protein belongs to the DNA polymerase type-Y family. The cofactor is Mg(2+).

The protein resides in the nucleus. Its subcellular location is the nucleolus. It is found in the mitochondrion. It localises to the cytoplasm. The protein localises to the cytoskeleton. The protein resides in the spindle. In terms of biological role, deoxycytidyl transferase involved in DNA repair. Transfers a dCMP residue from dCTP to the 3'-end of a DNA primer in a template-dependent reaction. May assist in the first step in the bypass of abasic lesions by the insertion of a nucleotide opposite the lesion. Required for normal induction of mutations by physical and chemical agents. Involved in mitochondrial DNA mutagenesis. The protein is DNA repair protein rev1 of Schizosaccharomyces pombe (strain 972 / ATCC 24843) (Fission yeast).